Here is a 465-residue protein sequence, read N- to C-terminus: Protein Loquacious (465 aa).

The tract at residues 1 to 337 (MDQENFHGSS…DSICGELEGE (337 aa)) is necessary for enhancing pre-miRNA processing by Dcr-1. Residues 1 to 379 (MDQENFHGSS…TLKNATGKKL (379 aa)) form a not required for interaction with Dcr-1 region. Residues 1-392 (MDQENFHGSS…QKTCLKNNKI (392 aa)) are important for homodimerization and interaction with Dcr-1. The sufficient for binding RNA stretch occupies residues 129 to 211 (NGLAMKTPVS…DKLIGAQLPE (83 aa)). The necessary for promoting preferential binding of Dcr-2 to the less stably base paired ends of siRNAs stretch occupies residues 129–322 (NGLAMKTPVS…WMRLQETPID (194 aa)). The region spanning 135–206 (TPVSILQELL…ARALIDKLIG (72 aa)) is the DRBM 1 domain. The tract at residues 209–249 (LPESPSSSAGPSVTGLTVAGSGGDGNANATGGGDASDKTVG) is enables simultaneous binding of both DRBM 1 and 2 domains to dsRNA. The tract at residues 210 to 246 (PESPSSSAGPSVTGLTVAGSGGDGNANATGGGDASDK) is disordered. Residues 211-223 (ESPSSSAGPSVTG) are compositionally biased toward polar residues. The segment at 220–465 (SVTGLTVAGS…LEYLKIMTKK (246 aa)) is necessary and sufficient for enhancing processing of pre-miRNAs by Dcr-1. A compositionally biased stretch (gly residues) spans 228 to 242 (GSGGDGNANATGGGD). Residues 245–322 (DKTVGNPIGW…WMRLQETPID (78 aa)) are sufficient for binding RNA. Positions 250–318 (NPIGWLQEMC…AHRMWMRLQE (69 aa)) constitute a DRBM 2 domain. Positions 308 to 309 (AA) are necessary for binding pre-miRNA. Residues 338–359 (PRSSENYYGELKDISVPTLTTQ) form a required for binding to Dcr-2 and to fully enhance Dcr-2 mediated cleavage of 3' overhanging termini (3'ovr) and blunt termini (BLT) dsRNAs. However, this region is dispensable for binding the dsRNA substrates region. A necessary for interaction with Dcr-1 region spans residues 340-465 (SSENYYGELK…LEYLKIMTKK (126 aa)). Residues 392 to 463 (IDYIKLLGEI…NALEYLKIMT (72 aa)) are sufficent for binding to Dcr-1. In terms of domain architecture, DRBM 3 spans 393-461 (DYIKLLGEIA…AQNALEYLKI (69 aa)).

As to quaternary structure, homodimer. Interacts with dicer enzyme Dcr-1. In terms of assembly, component of the miRNA-directed RNA-induced loading complex (miRLC), composed of at least Dcr-1, AGO1 and loqs isoform PB (loqs-PB), which processes pre-miRNAs and loads the resulting miRNAs into the Argonaute 1 (AGO1)-containing RNA-induced silencing complex (miRISC) to target the selective destruction of homologous RNAs. Interacts (via DRBM 3 domain) with dicer enzyme Dcr-1 (via helicase domain). Different regions of the Dcr-1-loqs-PB heterodimer collaborate to recognize, bind and position the pre-miRNA for Dcr-1 mediated cleavage. In the absence of miRNA substrates, the heterodimer favors a closed, catalytically incompetent, conformation, whereas binding of authentic pre-miRNA substrates stabilizes the relatively rare open, catalytically competent, conformation of the heterodimer. During substrate recognition, the Dcr-1 PAZ domain and pre-miRNA interact with the DRBM 1 domain of loqs-PB, which likely contributes to substrate recognition and stabilization. At the miRNA binding stage, the Dcr-1 DRBM domain and the loqs-PB DRBM domains then bind the pre-miRNA in tandem to form a tight 'belt' around the pre-miRNA stem, the pre-miRNA loop is docked in the loop-binding region formed by DUF283, DRBM and part of the helicase domain of Dcr-1, and the loqs-PB DRBM 1 and the wing domain of Dcr-1 act together to bind the 5' and 3' pre-miRNA termini within the PAZ and platform domains of Dcr-1. These interactions between the proteins and their pre-miRNA substrate stabilize a distorted form of the pre-miRNA and position the scissile phosphodiester bonds of the pre-miRNA at the RNase III catalytic cleavage sites of Dcr-1. Following Dcr-1 mediated cleavage, the miRNA duplex remains bound to loqs-PB DRBM 1, which dissociates from the Dcr-1 RNase III 1 domain but remains in contact with the PAZ and wing domains suggesting that the heterodimer presents the mature miRNA to AGO2 for loading into the RNA-induced silencing complex (miRISC). As to quaternary structure, able to interact with dicer enzyme Dcr-1. However, the relevance of such an interaction is unclear in vivo and another report found that it did not interact with Dcr-1. Monomer. Interacts (via C-terminus) with dicer enzyme Dcr-2 (via N-terminus); interaction is required for RNAi activity in producing siRNAs from a subset of endo- and exo-dsRNAs, and in the alternative siRLC, the interaction enhances the binding preference of the protein for the thermodynamically more stable ends of endogenous siRNAs. Interaction with Dcr-2 is RNA independent, however the isoform must bind both dsRNA and Dcr-2 to enhance Dcr-2 cleavage activity. Does not interact with Dcr-1. As to expression, strong expression in males and females. Expression in ovaries is relatively weak. In terms of tissue distribution, strong expression in females and relatively weak expression in males. Strong expression in ovaries.

Its subcellular location is the cytoplasm. The protein resides in the cytosol. Double-stranded RNA-binding protein which can function in gene silencing by acting with Dcr-1 to enhance its ATP-independent processing of a specific subset of precursor micro-RNAs (pre-miRNAs) to mature miRNAs. Some reports found it was able to enhance the efficiency of pre-miRNA processing by Dcr-1, and can shift the cleavage site of Dcr-1 altering the length of the mature miRNAs produced by Dcr-1 alone. However, in contrast to isoform PB, it is not necessary or sufficient for enhancing miRNA biogenesis, and is not required for development or female germline stem cell (GSC) maintenance. Another report also found that it decreases binding of Dcr-1 to the miRNA substrate let-7. Functionally, double-stranded RNA-binding protein which functions in gene silencing by acting with Dcr-1 to enhance its ATP-independent processing of a specific subset of precursor micro-RNAs (pre-miRNAs) to mature miRNAs. Function is essential for development and female germline stem cell (GSC) maintenance. Functions in miRNA-mediated gene silencing by enhancing the binding affinity and specific pre-miRNA processing activity of Dcr-1, and as part of the loqs-PB-Dcr-1 complex, is involved in substrate discrimination, correctly positioning the pre-miRNA in the Dcr-1 catalytic center for cleavage, and miRNA loading into the Argonaute 1 (Ago1)-containing RNA-induced silencing complex (miRISC). Increases the binding affinity of Dcr-1 to pre-miRNAs, thereby increasing dicing efficiency and broadening the range of substrates that can be processed by the dicer. It may also confer the substrate specificity of Dcr-1 towards pre-miRNAs, as in its absence Dcr-1 displays siRNA-generating activity towards long dsRNA substrates. It can also shift the cleavage site of Dcr-1 for a small number of pre-miRNAs, changing the length of the mature miRNAs produced by Dcr-1 alone. Increases the range of pre-miRNAs that can be processed by Dcr-1, by enhancing the dicing of suboptimal hairpin substrates including ones with mismatches at the dicing site. This function may also promote the generation of novel miRNA genes as it appears to have an important role in processing evolutionarily young miRNA genes, suggesting that it may also enhance dicing of substrates that have not acquired hairpin features required for efficient miRNA processing. As newly emerged miRNAs can have deleterious or beneficial effects on fitness, this function is likely part of a regulatory system that prevents excessive emergence of active miRNA genes and thus keeps them within an optimal range. Also forms a RISC loading complex (miRLC) with Dcr-1 to mediate Ago1-loading of mature miRNAs into the RNA-induced silencing complex (miRISC). In female ovaries, required for Dcr-1 to generate the twenty-three nucleotide isomiR variant of miR-307a which is able to repress its targets Gk2 and tara. Its function is as follows. Double-stranded RNA-binding protein which has an essential role in gene silencing (RNAi) by acting with Dcr-2 to enhance its ATP-dependent processing of a subset of endogenous (endo) and exogenous (exo) dsRNAs into short interfering RNAs (siRNAs). Functions in RNAi by increasing the initial binding affinity of Dcr-2 to certain dsRNA substrates, and in the absence of r2d2, may also function in siRNA loading into the Argonaute 2 (AGO2)-containing RNA-induced silencing complex (siRISC) and guide strand selection for target silencing by the siRISC. Promotes Dcr-2 cleavage of a subset of dsRNAs, including endo-dsRNAs derived from convergent transcription, inverted repeats and transposons. Also enables Dcr-2 to produce hairpin-derived endo-siRNAs in the presence of cellular inhibitory inorganic phosphate, likely by increasing the binding affinity of the enzyme to the hairpin dsRNAs allowing the dsRNA to displace phosphate bound to Dcr-2. According to many reports, the cleavage reaction mode of Dcr-2 changes according to the termini of the dsRNA substrate, with the enzyme displaying a preference for processing blunt termini (BLT), likely non-self dsRNAs, over dsRNAs with 2 nucleotides 3' overhanging (3'ovr) termini, which are typically the structure of endo-dsRNAs. According to many reports, interaction with Loqs-PD modifies the molecular recognition mechanisms of Dcr-2 towards sub-optimal 3'ovr dsRNA substrates and thus enables the dicer to cleave endo-dsRNA templates with diverse termini. However, according to another report, the mode of cleavage reaction is not affected by the presence or absence of loqs-PD. In the absence of r2d2, may also form an alternative RISC loading complex (siRLC) with Dcr-2 to mediate AGO2-loading of endo- and exo-siRNAs into the RNA-induced silencing complex (siRISC). Many reports suggest that loqs-PD and r2d2 function independently with dcr-2 in distinct siRNA pathways, and may even compete for binding to the enzyme. Loaded siRNAs serve as a guide to direct the siRISC to complementary RNAs to degrade them or prevent their translation. The siRLC plays an important role in the ATP-dependent asymmetry sensing of the duplex, and is therefore also responsible for the selection of the strand that ultimately acts as the guide siRNA for the siRISC. Thermodynamically asymmetric endo-siRNAs can be pre-oriented in the siRLC by the Loqs-PD and DCr-2 complex, which preferentially binds to the most thermodynamically stable strand prior to loading into the siRISC. Appears to be involved in promoting double-strand breaks (DSBs) following exposure to a low-dose/dose-rate (LDR) of ionizing radiation. In Drosophila melanogaster (Fruit fly), this protein is Protein Loquacious.